The sequence spans 493 residues: Trans-aconitate decarboxylase 1 (493 aa).

Residues 1 to 22 (MAPALNANPTTKRDELSAPSAS) form a disordered region.

Belongs to the class-II fumarase/aspartase family.

The protein resides in the cytoplasm. It is found in the cytosol. The protein localises to the nucleus. The catalysed reaction is trans-aconitate + H(+) = itaconate + CO2. Its pathway is secondary metabolite biosynthesis. Its function is as follows. Trans-aconitate decarboxylase; part of the gene cluster that mediates the biosynthesis of itaconic acid and 2-hydroxyparaconate. Cis-aconitate is secreted by the mitochondrial tricarboxylate transporter MTT1. In the cytosol cis-aconitate is converted into trans-aconitate via isomerization by the aconitate-delta-isomerase ADI1. Decarboxylation of trans-aconitate by the trans-aconitate decarboxylase TAD1 then leads then to the production of itaconic acid. The cytochrome P450 monooxygenase CYP3 further converts itaconate to 2-hydroxyparaconate via oxidation of the double bond, leading to a transient epoxide, which can subsequently be lactonized to produce 2-hydroxyparaconate. Secretion of itaconate and possibly 2-hydroxyparaconate into the medium is mediated by the major facilitator ITP1. The glyoxalase domain-containing protein RDO1 is not involved in the biosynthesis of itaconate and 2-hydroxyparaconate, however, it might play a role in the further conversion of 2-hydroxyparaconate to itatartarate. The sequence is that of Trans-aconitate decarboxylase 1 from Mycosarcoma maydis (Corn smut fungus).